The chain runs to 211 residues: Metalloproteinase inhibitor 3 (211 aa).

The first 23 residues, 1-23 (MTPWLGLVVLLSCWSLGHWGTEA), serve as a signal peptide directing secretion. Position 24 (cysteine 24) interacts with Zn(2+). 2 involved in metalloproteinase-binding regions span residues 24–27 (CTCS) and 88–89 (ES). Disulfide bonds link cysteine 24/cysteine 91, cysteine 26/cysteine 118, cysteine 36/cysteine 143, cysteine 145/cysteine 192, cysteine 150/cysteine 155, and cysteine 163/cysteine 184. Residues 24-143 (CTCSPSHPQD…GLNYRYHLGC (120 aa)) form the NTR domain. The segment at 105 to 188 (TGRVYEGKMY…SKHYACIRQK (84 aa)) is mediates interaction with EFEMP1.

The protein belongs to the protease inhibitor I35 (TIMP) family. In terms of assembly, interacts with EFEMP1. Interacts with KDR.

Its subcellular location is the secreted. It localises to the extracellular space. The protein localises to the extracellular matrix. Mediates a variety of processes including matrix regulation and turnover, inflammation, and angiogenesis, through reversible inhibition of zinc protease superfamily enzymes, primarily matrix metalloproteinases (MMPs). Regulates extracellular matrix (ECM) remodeling through inhibition of matrix metalloproteinases (MMP) including MMP-1, MMP-2, MMP-3, MMP-7, MMP-9, MMP-13, MMP-14 and MMP-15. Additionally, modulates the processing of amyloid precursor protein (APP) and apolipoprotein E receptor ApoER2 by inhibiting two alpha-secretases ADAM10 and ADAM17. Functions as a tumor suppressor and a potent inhibitor of angiogenesis. Exerts its anti-angiogenic effect by directly interacting with vascular endothelial growth factor (VEGF) receptor-2/KDR, preventing its binding to the VEGFA ligand. Selectively induces apoptosis in angiogenic endothelial cells through a caspase-independent cell death pathway. Mechanistically, inhibits matrix-induced focal adhesion kinase PTK2 tyrosine phosphorylation and association with paxillin/PXN and disrupts the incorporation of ITGB3, PTK2 and PXN into focal adhesion contacts on the matrix. The polypeptide is Metalloproteinase inhibitor 3 (Timp3) (Rattus norvegicus (Rat)).